The primary structure comprises 644 residues: G-protein coupled receptor-associated protein LMBRD2 (644 aa).

Over 1–4 (MGTV) the chain is Extracellular. Residues 5–27 (SLAVQLFIVFLLTSYLLNKYSTI) traverse the membrane as a helical segment. The Cytoplasmic portion of the chain corresponds to 28-31 (RKQN). Residues 32–52 (PIVTISTFIGWYFSLIIVFVL) form a helical membrane-spanning segment. Residues 53–102 (PLDVAITFFHKCENDRQRVLNTTSTPAPIVPECELPGGYVPDDVLFDLWR) are Extracellular-facing. N-linked (GlcNAc...) asparagine glycosylation is present at asparagine 73. The helical transmembrane segment at 103 to 123 (VVYWSAQILTWLILPLLQSYV) threads the bilayer. The Cytoplasmic portion of the chain corresponds to 124–145 (TAGNFTIFGKIRAAVINNTVYY). The chain crosses the membrane as a helical span at residues 146-166 (AIYSLCFLAILIYAMFKGVSI). The Extracellular portion of the chain corresponds to 167–172 (NIENLK). Residues 173-193 (VILVSASNTWGLFLLVVLLGH) traverse the membrane as a helical segment. At 194 to 369 (GLVELPRSLW…RLQTPFCRVL (176 aa)) the chain is on the cytoplasmic side. The stretch at 216 to 245 (YFDIEKLASEKSEAEENVKEIYKKVRVLFN) forms a coiled coil. A helical membrane pass occupies residues 370-390 (GVVTVFMTFFVLFSECTFFVV). At 391–412 (SYTVSPAAFVTEYASNRFHYKY) the chain is on the extracellular side. Residues 413–433 (TQFVAFGIIVYLITCAYFTIF) form a helical membrane-spanning segment. Over 434-453 (RLQIYKYYHLDPNGHTDENS) the chain is Cytoplasmic. The chain crosses the membrane as a helical span at residues 454 to 474 (ILFSAILLCRLTPPICLNFLG). Residues 475–502 (MIHMDSHVSMAKSFGVETQFTKLMGHLD) lie on the Extracellular side of the membrane. A helical transmembrane segment spans residues 503–523 (VIPILAKGINIYLPICIILLC). Topologically, residues 524–644 (AIHYYRVGAY…PSSSGFFDDM (121 aa)) are cytoplasmic. Over residues 567-576 (SIKRSNERNQ) the composition is skewed to basic and acidic residues. A disordered region spans residues 567–644 (SIKRSNERNQ…PSSSGFFDDM (78 aa)). Positions 578 to 594 (NQSWTNTITSNTSTTSN) are enriched in low complexity. Residues 621 to 644 (VSSTTRISLSPTEHPSSSGFFDDM) are compositionally biased toward polar residues.

It belongs to the LIMR family.

It localises to the cell membrane. Its function is as follows. May associate with G-protein coupled receptors and regulate downstream signaling pathways. The chain is G-protein coupled receptor-associated protein LMBRD2 from Caenorhabditis briggsae.